A 275-amino-acid polypeptide reads, in one-letter code: Polyamine aminopropyltransferase (275 aa).

Residues 2–235 (EFWFTEKQTE…GMWTFTIGSK (234 aa)) form the PABS domain. Gln-31 provides a ligand contact to S-methyl-5'-thioadenosine. Spermidine is bound by residues His-62 and Asp-86. S-methyl-5'-thioadenosine-binding positions include Asp-106 and 137–138 (DG). The active-site Proton acceptor is the Asp-155. Residue 155–158 (DSTE) coordinates spermidine. Residue Pro-162 coordinates S-methyl-5'-thioadenosine.

Belongs to the spermidine/spermine synthase family. Homodimer or homotetramer.

It localises to the cytoplasm. The enzyme catalyses S-adenosyl 3-(methylsulfanyl)propylamine + putrescine = S-methyl-5'-thioadenosine + spermidine + H(+). Its pathway is amine and polyamine biosynthesis; spermidine biosynthesis; spermidine from putrescine: step 1/1. Its function is as follows. Catalyzes the irreversible transfer of a propylamine group from the amino donor S-adenosylmethioninamine (decarboxy-AdoMet) to putrescine (1,4-diaminobutane) to yield spermidine. The sequence is that of Polyamine aminopropyltransferase from Shouchella clausii (strain KSM-K16) (Alkalihalobacillus clausii).